A 467-amino-acid polypeptide reads, in one-letter code: Asparagine--tRNA ligase (467 aa).

Belongs to the class-II aminoacyl-tRNA synthetase family. Homodimer.

It localises to the cytoplasm. It carries out the reaction tRNA(Asn) + L-asparagine + ATP = L-asparaginyl-tRNA(Asn) + AMP + diphosphate + H(+). The sequence is that of Asparagine--tRNA ligase from Bacteroides fragilis (strain YCH46).